The chain runs to 315 residues: Homeobox-leucine zipper protein HAT3 (315 aa).

The segment at 140 to 163 (SCSLGGGSDDEDGSGNGDDSSRKK) is disordered. Residues 159–218 (SSRKKLRLSKEQALVLEETFKEHSTLNPKQKMALAKQLNLRTRQVEVWFQNRRARTKLKQ) constitute a DNA-binding region (homeobox). The tract at residues 226-247 (LKRCCENLTDENRRLQKEVSEL) is leucine-zipper. A compositionally biased stretch (low complexity) spans 280-305 (SSSSVAPPVMNSSSPMGPMSPWAAMP). Positions 280–315 (SSSSVAPPVMNSSSPMGPMSPWAAMPLRQRPAAGSH) are disordered.

This sequence belongs to the HD-ZIP homeobox family. Class II subfamily.

Its subcellular location is the nucleus. In terms of biological role, probable transcription factor. This Arabidopsis thaliana (Mouse-ear cress) protein is Homeobox-leucine zipper protein HAT3 (HAT3).